The primary structure comprises 318 residues: Type II restriction enzyme HaeIII (318 aa).

It carries out the reaction Endonucleolytic cleavage of DNA to give specific double-stranded fragments with terminal 5'-phosphates.. A P subtype restriction enzyme that recognizes the double-stranded sequence 5'-GGCC-3' and cleaves after G-2. This is Type II restriction enzyme HaeIII (haeIIIR) from Haemophilus aegyptius.